Consider the following 152-residue polypeptide: Non-specific lipid transfer protein GPI-anchored 8 (152 aa).

The signal sequence occupies residues 1–23 (MNITRILGVVTTVVILYSVQVTA). Disulfide bonds link Cys-42–Cys-56, Cys-57–Cys-98, and Cys-70–Cys-107. An N-linked (GlcNAc...) asparagine glycan is attached at Asn-108. Ser-124 is lipidated: GPI-anchor amidated serine. The propeptide at 125–152 (GNSFSTKKNTALAITFFGFSFVFLGMII) is removed in mature form.

Belongs to the plant LTP family.

It is found in the cell membrane. Probable lipid transfer protein. This is Non-specific lipid transfer protein GPI-anchored 8 from Arabidopsis thaliana (Mouse-ear cress).